The sequence spans 131 residues: Large ribosomal subunit protein bL17 (131 aa).

This sequence belongs to the bacterial ribosomal protein bL17 family. As to quaternary structure, part of the 50S ribosomal subunit. Contacts protein L32.

This is Large ribosomal subunit protein bL17 from Thermotoga sp. (strain RQ2).